Consider the following 568-residue polypeptide: Urease subunit alpha (568 aa).

The region spanning 131-568 (GGIDTHIHFI…LPMAQRYFLF (438 aa)) is the Urease domain. Ni(2+) is bound by residues His-136, His-138, and Lys-219. Lys-219 carries the post-translational modification N6-carboxylysine. Residue His-221 coordinates substrate. Residues His-248 and His-274 each contribute to the Ni(2+) site. Catalysis depends on His-322, which acts as the Proton donor. Ni(2+) is bound at residue Asp-362.

It belongs to the metallo-dependent hydrolases superfamily. Urease alpha subunit family. As to quaternary structure, heterotrimer of UreA (gamma), UreB (beta) and UreC (alpha) subunits. Three heterotrimers associate to form the active enzyme. Ni cation serves as cofactor. In terms of processing, carboxylation allows a single lysine to coordinate two nickel ions.

Its subcellular location is the cytoplasm. It catalyses the reaction urea + 2 H2O + H(+) = hydrogencarbonate + 2 NH4(+). It functions in the pathway nitrogen metabolism; urea degradation; CO(2) and NH(3) from urea (urease route): step 1/1. The polypeptide is Urease subunit alpha (Nostoc sp. (strain PCC 7120 / SAG 25.82 / UTEX 2576)).